The following is a 239-amino-acid chain: Small ribosomal subunit protein uS3 (239 aa).

Residues 39–107 enclose the KH type-2 domain; it reads IRAALMKTLK…EVLINIVEVR (69 aa). Residues 214 to 239 are disordered; that stretch reads AQDKKMAEQDHGGGGGDRRRRDRDAA.

It belongs to the universal ribosomal protein uS3 family. As to quaternary structure, part of the 30S ribosomal subunit. Forms a tight complex with proteins S10 and S14.

Binds the lower part of the 30S subunit head. Binds mRNA in the 70S ribosome, positioning it for translation. The sequence is that of Small ribosomal subunit protein uS3 from Methylocella silvestris (strain DSM 15510 / CIP 108128 / LMG 27833 / NCIMB 13906 / BL2).